The sequence spans 777 residues: ATPase ARSA1 (777 aa).

110 to 117 (KGGVGKTS) serves as a coordination point for ATP. Residue aspartate 139 is part of the active site. ATP-binding positions include asparagine 372 and 454–461 (KGGVGKTS). Residue aspartate 483 is part of the active site. Asparagine 712 lines the ATP pocket.

It belongs to the arsA ATPase family. Monomer. Interacts with TOC34.

The protein localises to the cytoplasm. It localises to the cytosol. Functionally, ATPase required for the post-translational delivery of tail-anchored (TA) proteins to the chloroplast. Required for the accumulation of TOC34, an essential component of the outer chloroplast membrane translocon (TOC) complex. Recognizes and selectively binds the transmembrane domain of TA proteins in the cytosol. This complex then targets to chloroplast, where the tail-anchored protein is released for insertion. This process is regulated by ATP binding and hydrolysis. The polypeptide is ATPase ARSA1 (Chlamydomonas reinhardtii (Chlamydomonas smithii)).